The chain runs to 377 residues: Endoplasmic reticulum-Golgi intermediate compartment protein 2 (377 aa).

Residues 1 to 33 are Cytoplasmic-facing; the sequence is MRRLNRRKTLSLVKELDAFPKVPDSYVETSASG. Residues 34-54 form a helical membrane-spanning segment; the sequence is GTVSLIAFTTMALLTIMEFSV. Over 55–319 the chain is Lumenal; that stretch reads YQDTWMKYEY…PFWQFFVRLC (265 aa). Residues 320–340 traverse the membrane as a helical segment; the sequence is GIIGGIFSTTGMLHGIGKFIV. The Cytoplasmic segment spans residues 341-377; sequence EIICCRFRLGSYKPVRSVPFADGHTDNHLPLLENNTH.

Belongs to the ERGIC family. May form a heteromeric complex composed of ERGIC1, ERGIC2 and ERGIC3. Interacts with ERGIC3, the interaction is required for the stable expression of both proteins. May interact with EEF1A1.

The protein resides in the endoplasmic reticulum-Golgi intermediate compartment membrane. It localises to the golgi apparatus. It is found in the cis-Golgi network membrane. Its subcellular location is the endoplasmic reticulum membrane. The protein localises to the cytoplasm. The protein resides in the nucleus. In terms of biological role, possible role in transport between endoplasmic reticulum and Golgi. This Mus musculus (Mouse) protein is Endoplasmic reticulum-Golgi intermediate compartment protein 2 (Ergic2).